The primary structure comprises 498 residues: Phosphatidylserine synthase (498 aa).

Positions 1-65 (MKKRTNSRGT…GSVSSAGARR (65 aa)) are disordered. Residues 1 to 92 (MKKRTNSRGT…VDDISLDFFY (92 aa)) lie on the Cytoplasmic side of the membrane. The span at 7 to 25 (SRGTPTSSGDALLDTSFSS) shows a compositional bias: polar residues. A helical transmembrane segment spans residues 93–113 (KPHTITLLAVSVLAVMYFAFV). Topologically, residues 114 to 122 (RNEANVDEN) are lumenal. Residues 123–143 (LWAGLLCIVFFFLIVSVIAFP) traverse the membrane as a helical segment. Topologically, residues 144-153 (NGPFTRPHPA) are cytoplasmic. Residues 154–174 (VWRILFGCSVLYLLTLQFLMF) traverse the membrane as a helical segment. Topologically, residues 175–239 (QNYPTIRSIF…AFKAILIRHM (65 aa)) are lumenal. An N-linked (GlcNAc...) asparagine glycan is attached at Asn-205. Residues 240 to 260 (GILWAISVMWEITEITFAHLL) traverse the membrane as a helical segment. The Cytoplasmic segment spans residues 261–266 (PNFIEC). The helical transmembrane segment at 267–287 (WWDALILDVIICNGLGIWMGL) threads the bilayer. Residues 288–339 (KICQILEMREYKWASIKDISTTTGKIKRAMLQFTPESWSAIRWLDPKSTAMR) are Lumenal-facing. Residues 340–360 (FAAVIQLVIFWQVTELNTFFL) traverse the membrane as a helical segment. Residues 361 to 367 (KHIFEMP) lie on the Cytoplasmic side of the membrane. Residues 368–388 (PDHFIVIGRLIFIGLFVAPSV) traverse the membrane as a helical segment. The Lumenal portion of the chain corresponds to 389 to 402 (RQYYVYVTDTRCKR). A helical transmembrane segment spans residues 403-423 (VGTQCWVYGAIMVSEAILCIK). At 424-436 (NGKELFERTQAIN) the chain is on the cytoplasmic side. The helical transmembrane segment at 437–457 (IVLWLTVQVIISVAFVYLAVY) threads the bilayer. The Lumenal portion of the chain corresponds to 458–498 (WQQRQLKKVSSTPAKTKETIPASSSSPSKGKLSPQKEKKLK). The tract at residues 465 to 498 (KVSSTPAKTKETIPASSSSPSKGKLSPQKEKKLK) is disordered. Positions 478-490 (PASSSSPSKGKLS) are enriched in low complexity.

The protein belongs to the phosphatidyl serine synthase family.

The protein resides in the endoplasmic reticulum membrane. The enzyme catalyses a 1,2-diacyl-sn-glycero-3-phosphoethanolamine + L-serine = a 1,2-diacyl-sn-glycero-3-phospho-L-serine + ethanolamine. It functions in the pathway phospholipid metabolism; phosphatidylserine biosynthesis. Functionally, catalyzes a base-exchange reaction in which the polar head group of phosphatidylethanolamine (PE) is replaced by L-serine. The chain is Phosphatidylserine synthase from Drosophila melanogaster (Fruit fly).